The primary structure comprises 431 residues: Trigger factor (431 aa).

The 86-residue stretch at 163-248 folds into the PPIase FKBP-type domain; it reads GHFAVIDFTG…LSEIKVKELP (86 aa).

It belongs to the FKBP-type PPIase family. Tig subfamily.

Its subcellular location is the cytoplasm. It carries out the reaction [protein]-peptidylproline (omega=180) = [protein]-peptidylproline (omega=0). In terms of biological role, involved in protein export. Acts as a chaperone by maintaining the newly synthesized protein in an open conformation. Functions as a peptidyl-prolyl cis-trans isomerase. The chain is Trigger factor from Geobacter sulfurreducens (strain ATCC 51573 / DSM 12127 / PCA).